Here is a 207-residue protein sequence, read N- to C-terminus: Probable GTP-binding protein EngB (207 aa).

Residues 23 to 203 (GAPEVCFVGR…GAHIENWISP (181 aa)) enclose the EngB-type G domain. GTP-binding positions include 31 to 38 (GRSNAGKS), 58 to 62 (GRTRL), 83 to 86 (DLPG), 150 to 153 (TKAD), and 182 to 184 (FSS). Residues S38 and T60 each contribute to the Mg(2+) site.

It belongs to the TRAFAC class TrmE-Era-EngA-EngB-Septin-like GTPase superfamily. EngB GTPase family. Requires Mg(2+) as cofactor.

Its function is as follows. Necessary for normal cell division and for the maintenance of normal septation. This is Probable GTP-binding protein EngB from Bordetella bronchiseptica (strain ATCC BAA-588 / NCTC 13252 / RB50) (Alcaligenes bronchisepticus).